A 1036-amino-acid chain; its full sequence is PDZ domain-containing RING finger protein 4 (1036 aa).

The segment at 18 to 56 (CKLCGQVLEEPLCTPCGHVFCASCLLPWAVRRRRCPLQC) adopts an RING-type; degenerate zinc-finger fold. Residues 129–160 (ARGGCGPTPRAGRGGGARGGPPGGRWGRGRGP) show a composition bias toward gly residues. The tract at residues 129–161 (ARGGCGPTPRAGRGGGARGGPPGGRWGRGRGPG) is disordered. PDZ domains follow at residues 224–314 (TIVL…LRRT) and 402–486 (EVEL…VARP). The tract at residues 515-590 (HNEAMQPTAN…SLKSKRDLGQ (76 aa)) is disordered. Residues 548-566 (NHEKDSGVGRTDESLRNDE) show a composition bias toward basic and acidic residues. The stretch at 655-689 (NQGEQEGVEHELQLLNEELRNIELECQNIMQAHRL) forms a coiled coil. Positions 726 to 735 (EHPEKSDKDS) are enriched in basic and acidic residues. Positions 726 to 819 (EHPEKSDKDS…VLEGSKLPDQ (94 aa)) are disordered. Positions 736-750 (SSAYNTAESCRSTPL) are enriched in polar residues. Residues 774-799 (STMAATQSSSGQSSKESTSTKAKTTE) are compositionally biased toward low complexity. A compositionally biased stretch (basic and acidic residues) spans 805–819 (ESKEKVLEGSKLPDQ).

In Homo sapiens (Human), this protein is PDZ domain-containing RING finger protein 4 (PDZRN4).